The sequence spans 312 residues: tRNA dimethylallyltransferase (312 aa).

10-17 is a binding site for ATP; the sequence is GPTAVGKT. Residue 12–17 coordinates substrate; sequence TAVGKT. Positions 35–38 are interaction with substrate tRNA; that stretch reads DSMQ.

Belongs to the IPP transferase family. As to quaternary structure, monomer. It depends on Mg(2+) as a cofactor.

It carries out the reaction adenosine(37) in tRNA + dimethylallyl diphosphate = N(6)-dimethylallyladenosine(37) in tRNA + diphosphate. Its function is as follows. Catalyzes the transfer of a dimethylallyl group onto the adenine at position 37 in tRNAs that read codons beginning with uridine, leading to the formation of N6-(dimethylallyl)adenosine (i(6)A). The polypeptide is tRNA dimethylallyltransferase (Alkaliphilus metalliredigens (strain QYMF)).